The following is a 225-amino-acid chain: NAD(P)H-quinone oxidoreductase subunit K, chloroplastic (225 aa).

4 residues coordinate [4Fe-4S] cluster: Cys-43, Cys-44, Cys-108, and Cys-139.

The protein belongs to the complex I 20 kDa subunit family. NDH is composed of at least 16 different subunits, 5 of which are encoded in the nucleus. [4Fe-4S] cluster is required as a cofactor.

The protein localises to the plastid. Its subcellular location is the chloroplast thylakoid membrane. It carries out the reaction a plastoquinone + NADH + (n+1) H(+)(in) = a plastoquinol + NAD(+) + n H(+)(out). The enzyme catalyses a plastoquinone + NADPH + (n+1) H(+)(in) = a plastoquinol + NADP(+) + n H(+)(out). In terms of biological role, NDH shuttles electrons from NAD(P)H:plastoquinone, via FMN and iron-sulfur (Fe-S) centers, to quinones in the photosynthetic chain and possibly in a chloroplast respiratory chain. The immediate electron acceptor for the enzyme in this species is believed to be plastoquinone. Couples the redox reaction to proton translocation, and thus conserves the redox energy in a proton gradient. The chain is NAD(P)H-quinone oxidoreductase subunit K, chloroplastic from Lactuca sativa (Garden lettuce).